Consider the following 90-residue polypeptide: c-Myc-binding protein homolog (90 aa).

The protein belongs to the AMY1 family.

The protein localises to the nucleus. The chain is c-Myc-binding protein homolog (mycbp) from Dictyostelium discoideum (Social amoeba).